The sequence spans 36 residues: TICTGADRPCAACCPCCPGTSCQGPESNGVVYCRNF.

Disulfide bonds link Cys3/Cys17, Cys10/Cys22, Cys13/Cys14, and Cys16/Cys33.

It belongs to the neurotoxin 11 (kappa toxin) family. In terms of tissue distribution, expressed by the venom gland.

It localises to the secreted. In terms of biological role, this excitatory toxin inhibits insect calcium-activated potassium (KCa) channels (Slo-type). This chain is Lambda-hexatoxin-Hv1a, found in Hadronyche versuta (Blue mountains funnel-web spider).